We begin with the raw amino-acid sequence, 917 residues long: MAADVFMCSPRRPRSRGRSVLLKPQVPEDDDDSDTDEPSPPPPSGVATSARAHASAAPLPPRAGPGREEPPRRQQIIHSGHFMVSSPHREHPPKKGYDFDTVNKQTCQTYSFGKTSSCHLSIDASLTKLFECMTLAYSGKLVSPKWKNFKGLKLQWRDKIRLNNAIWRAWYMQYLEKRRNPVCHFVTPLDGSVDVDEHRRPEAITTEGKYWKSRIEIVIREYHKWRTYFKKRLQQHKDEDLSSLAQDDDMLYWHKHGDGWKTPVPMEEDSLLDTDMLMSEFSDTLFSTLSSHQPVAWPNPREIAHLGNADMIQPGLIPLQPNLDFMDTFEPFQDLFSSSRSIFGSMLPPPSSLPAADPSSPPSQGNILPNTALPPASLPNSLITSSAAPSLDPTEGQGCERTSQTVDPFIQPADFGPSEPPLSVPQPFLPVFTMTLLSPGPAPAPVPTALPLVPSPAPTLNPPTPPAFLQPQKFAGVSKSTPVITHTASATLTHDASATTFSQNQGLVITAHHPTPSSSPCALALSPVPQPPAVGPPQPHLTFIHPKPVSLTGVRHKQPPKIVPAPKPEPVSLVLKNACIAPAAFSGQPQKVIMTSAPLKREGILASTVSPSNVVIASAAITRASGVTEFLSHSTSSQPSPVSRLFSPSTVQDSLVKGEQVSLHGGSPQVPATGSSRDCPNSGQASPCPSEQSPSPQSPQNNCSGKSTDPKNVAALKNRQKHISAEQKRRFNIRMGFNTLNSLISNNSKQTSHAITLQKTMEYITKLQQERMQMQEEARRLREEIEELNTTIISCQQLLPATGVPVNCRQLDHMRDMFDEYVKSRTLQNWKFWIFSMIIKPLFESFKGMVSTSSLEEFHRTALSWLDQHCSLPVLRPMVLSTLRQLSTTTSILTDPSQLPEQASEAVTRMGKRSGES.

A disordered region spans residues M1–R72. A2 is modified (N-acetylalanine). Phosphoserine occurs at positions 9, 33, and 39. The span at P27–E37 shows a compositional bias: acidic residues. Residues A47 to A57 are compositionally biased toward low complexity. The tract at residues R73 to D327 is required for cytoplasmic localization. A transactivation domain region spans residues N322–P445. Disordered stretches follow at residues L347–T402 and S632–K711. The segment covering L378–A388 has biased composition (polar residues). A compositionally biased stretch (low complexity) spans S632 to S643. S667 bears the Phosphoserine mark. The segment covering V670–A685 has biased composition (polar residues). Residues S686–S704 are compositionally biased toward low complexity. The bHLH domain occupies K717–L767. The interval L767–L788 is leucine-zipper. Residues W830–V879 form a mediates heterotypic interactions between MLXIP and MLX and is required for cytoplasmic localization region. The disordered stretch occupies residues S897–S917.

Efficient DNA binding requires dimerization with another bHLH protein. Binds DNA as a homodimer or a heterodimer with MLX/TCFL4.

It localises to the cytoplasm. It is found in the nucleus. The protein localises to the mitochondrion outer membrane. Binds DNA as a heterodimer with MLX/TCFL4 and activates transcription. Binds to the canonical E box sequence 5'-CACGTG-3'. Plays a role in transcriptional activation of glycolytic target genes. Involved in glucose-responsive gene regulation. Regulates transcription in response to changes in cellular carbohydrate abundance such as occurs during fasting to feeding metabolic transition. Refeeding stimulates MLXIPL/ChREBP transcription factor, leading to increased BCKDK to PPM1K expression ratio, phosphorylation and activation of ACLY that ultimately results in the generation of malonyl-CoA and oxaloacetate immediate substrates of de novo lipogenesis and gluconeogenesis, respectively. In Mus musculus (Mouse), this protein is MLX-interacting protein.